We begin with the raw amino-acid sequence, 274 residues long: Sulfur carrier protein FdhD (274 aa).

Cys-121 acts as the Cysteine persulfide intermediate in catalysis. 258 to 263 (FSKPGR) provides a ligand contact to Mo-bis(molybdopterin guanine dinucleotide).

It belongs to the FdhD family.

It localises to the cytoplasm. Required for formate dehydrogenase (FDH) activity. Acts as a sulfur carrier protein that transfers sulfur from IscS to the molybdenum cofactor prior to its insertion into FDH. This is Sulfur carrier protein FdhD from Yersinia pseudotuberculosis serotype IB (strain PB1/+).